The chain runs to 349 residues: Interferon regulatory factor 2 (349 aa).

Residues 5 to 113 constitute a DNA-binding region (IRF tryptophan pentad repeat); that stretch reads RMRMRPWLEE…NAFRVYRMLP (109 aa). Residues Lys75 and Lys78 each carry the N6-acetyllysine modification. Lys137 participates in a covalent cross-link: Glycyl lysine isopeptide (Lys-Gly) (interchain with G-Cter in SUMO); alternate. A Glycyl lysine isopeptide (Lys-Gly) (interchain with G-Cter in SUMO2); alternate cross-link involves residue Lys137. Residue Lys166 forms a Glycyl lysine isopeptide (Lys-Gly) (interchain with G-Cter in SUMO) linkage. Residue Ser225 is modified to Phosphoserine. Residues 230-239 are compositionally biased toward polar residues; sequence YAESETTDSV. A disordered region spans residues 230 to 253; that stretch reads YAESETTDSVASDEENAEGRPHWR. Lys260 participates in a covalent cross-link: Glycyl lysine isopeptide (Lys-Gly) (interchain with G-Cter in SUMO2). Residue Lys293 forms a Glycyl lysine isopeptide (Lys-Gly) (interchain with G-Cter in SUMO) linkage. The interval 303 to 349 is disordered; that stretch reads SSWPPFTDLPLPAPVTPTPSSSRPDRETRASVIKKTSDITQARVKSC.

It belongs to the IRF family. In terms of assembly, interacts with BRD7, IRF2BP1 and IRF2BP2. Interacts with CREBBP in growing cells; the interaction acetylates IRF2 and regulates IRF2-dependent H4 promoter activity. In terms of processing, acetylated by CBP/ p300 during cell-growth. Acetylation on Lys-75 is required for stimulation of H4 promoter activity. Post-translationally, the major sites of sumoylation are Lys-137 and Lys-293. Sumoylation with SUMO1 increases its transcriptional repressor activity on IRF1 and diminishes its ability to activate ISRE and H4 promoter.

It localises to the nucleus. In terms of biological role, specifically binds to the upstream regulatory region of type I IFN and IFN-inducible MHC class I genes (the interferon consensus sequence (ICS)) and represses those genes. Also acts as an activator for several genes including H4 and IL7. Constitutively binds to the ISRE promoter to activate IL7. Involved in cell cycle regulation through binding the site II (HiNF-M) promoter region of H4 and activating transcription during cell growth. Antagonizes IRF1 transcriptional activation. This chain is Interferon regulatory factor 2 (Irf2), found in Mus musculus (Mouse).